A 111-amino-acid chain; its full sequence is MAFTEITPERAWDMIQTENAVLLDVRDAERFSYSRAQGAFHLTNQSYGEFQDTYDFDHPVIVSCYHGISSRSIAAFLAEQGYDNVYSVIGGFEGWQRAGLPMETAYGVKPI.

Positions 16–104 constitute a Rhodanese domain; it reads QTENAVLLDV…WQRAGLPMET (89 aa). C64 acts as the Cysteine persulfide intermediate in catalysis.

This sequence belongs to the GlpE family.

Its subcellular location is the cytoplasm. It carries out the reaction thiosulfate + hydrogen cyanide = thiocyanate + sulfite + 2 H(+). The enzyme catalyses thiosulfate + [thioredoxin]-dithiol = [thioredoxin]-disulfide + hydrogen sulfide + sulfite + 2 H(+). In terms of biological role, transferase that catalyzes the transfer of sulfur from thiosulfate to thiophilic acceptors such as cyanide or dithiols. May function in a CysM-independent thiosulfate assimilation pathway by catalyzing the conversion of thiosulfate to sulfite, which can then be used for L-cysteine biosynthesis. This chain is Thiosulfate sulfurtransferase GlpE, found in Actinobacillus succinogenes (strain ATCC 55618 / DSM 22257 / CCUG 43843 / 130Z).